A 161-amino-acid chain; its full sequence is Calcium-binding protein CML24 (161 aa).

EF-hand domains are found at residues glycine 13–threonine 48, alanine 49–glycine 84, asparagine 90–lysine 125, and cysteine 126–alanine 161. Aspartate 26, asparagine 28, aspartate 30, lysine 32, glutamate 37, aspartate 62, aspartate 64, asparagine 66, glutamate 73, aspartate 103, aspartate 105, asparagine 107, arginine 109, glutamate 114, aspartate 139, aspartate 141, aspartate 143, cysteine 145, and glutamate 150 together coordinate Ca(2+).

As to expression, expressed in seed coat, seedling radical, cotyledons, hypocotyl, shoot apex and elongating root. Expressed in the vasculature of cotyledons, leaves and roots. Highly expressed in guard cells, trichomes and hydathodes. Expressed in inflorescence stem branch points, silique abscission zone, young and mature styles and stigmatic papillae, mature anthers and developing seed.

Its function is as follows. Calcium-binding protein that may positively regulate abscisic acid (ABA) inhibition of germination and seedling development. May be required for photoperiod-induced flowering and function in ion homeostasis. The chain is Calcium-binding protein CML24 (CML24) from Arabidopsis thaliana (Mouse-ear cress).